Reading from the N-terminus, the 661-residue chain is Cartilage acidic protein 1 (661 aa).

The signal sequence occupies residues 1–27; that stretch reads MAPSADPGMSRMLPFLLLLWFLPITEG. The FG-GAP 1; atypical repeat unit spans residues 46-88; it reads DYDSNPTQLNYGVAVTDVDHDGDFEIVVAGYNGPNLVLKYDRA. One copy of the FG-GAP 2; atypical repeat lies at 105–147; the sequence is YALRDRQGNAIGVTACDIDGDGREEIYFLNTNNAFSGVATYTD. One copy of the FG-GAP 3; atypical repeat lies at 283–333; the sequence is AGVDDPHQHGRGVALADFNRDGKVDIVYGNWNGPHRLYLQMSTHGKVRFRD. Residues 395-437 form an FG-GAP 4; atypical repeat; sequence GDALEPEGRGTGGVVTDFDGDGMLDLILSHGESMAQPLSVFRG. Positions 559-605 constitute an EGF-like domain; it reads DTNECIQFPFVCPRDKPVCVNTYGSYRCRTNKKCSRGYEPNEDGTAC. Intrachain disulfides connect Cys563-Cys577, Cys570-Cys586, and Cys592-Cys605. Residues Thr608, Thr618, Thr619, Thr621, and Thr626 are each glycosylated (O-linked (GalNAc...) threonine).

O-glycosylated. In terms of tissue distribution, expressed in the interterritorial matrix of articular deep zone cartilage (at protein level). Isoform 1 and isoform 2 are expressed in brain. Isoform 1 is detected in lung and chondrocytes. Detected in cartilage, bone, cultured chondrocytes and lung, and at low levels in heart. Not detected in osteoblasts.

It is found in the secreted. It localises to the extracellular space. The protein resides in the extracellular matrix. The sequence is that of Cartilage acidic protein 1 (CRTAC1) from Homo sapiens (Human).